The sequence spans 965 residues: MNPQASLDRLAQRLSDAENLFKKVRVLVDLESAPLSLRSLSDPVRIASFLNTLSDRGNEYLAFIRHRPAFYLLRVASFGEQVPLGAGDLQGAVGLLTSAVRAFKDLKPPPEGTPAPANNLLENSNILTRLSQFIAHLRSLDLSQPVTFTPPASLVTLRCIEEITFSFWHAHWTAPPEVSLPKPNPQSKLERWLALSYAAALGAARDNAPKHRRELRALAKSLLTTERDLFAPVSVVTETSLTLPLAKERAREIFSMVDDALPGDAAARGAPVLGFRDADLNAASPEYVFLYEHVFEALLHDQTYGCARRTVEAFLERCLKFLVNLGSYVQTACSNKSHLSPPEIEGVRAAFHACGLTREACHTFSTMLAIAPAGGAASRLKHLHATVQHLEQITVFGRHFYECLRRCSPTSISHRLVREVLRTAQVEQNSATPWTAGAAEGSALGWPVHSYLRIFLPRPPEDDLAATFKAASESNFMKSLIGVSVKRDWDLNKFYVLSKKAPGGGGNGEGGSGGGNGGAGTVSRKQVRKFCEGLNPGDADYALEVVQSKYFAPEFARAVLLPELEAMLRGRVRRHVMLFRLRWLVLFAFEDAAGLAHIRRPLTLAYFQLTEIFGQGGVGSGAGAAGGGDGGALGNLLDHFHEAWTAARELVPEAGGEVPHELLTNIYRSLHAPAAREQLAAAAAFLKEIKPLVEGTWNMMRIASVLCHARYNYLSASGHLRVPFGEKPGYVDVPVPVFKETVKIMESSLHETLVILSQACQDLQRFYAACLGILDQNQFLATHPVQLDLSEPDFQAVKETLLGCLRRYREVASLAAGSCCFSLTRHFGALFDPPLITEAVVRKVLEFSEERDTTDAFIESLQQPIAKVEEEDWDDAPPKHALNDYDLTALREINESFPLPKQHGNNPPETTPSIKLSYTDSVNVSQITLDWEKFLRTSYIPQDAITSEFSHITVKKLEQSITGSF.

An interaction with large tegument protein region spans residues 489-965; sequence WDLNKFYVLS…KLEQSITGSF (477 aa).

The protein belongs to the herpesviridae inner tegument protein family. As to quaternary structure, interacts (via C-terminus) with the large tegument protein/LTP (via N-terminus).

It localises to the virion tegument. Its subcellular location is the host cytoplasm. It is found in the host nucleus. The protein localises to the host Golgi apparatus. The protein resides in the host trans-Golgi network. Plays an essential role in cytoplasmic secondary envelopment during viral egress. Interacts with the capsid via the large tegument protein/LTP and participates in its transport to the host trans-Golgi network (TGN) where secondary envelopment occurs. Modulates tegumentation and capsid accumulation at the viral assembly complex. The sequence is that of Inner tegument protein (63) from Equine herpesvirus 2 (strain 86/87) (EHV-2).